The chain runs to 50 residues: Large ribosomal subunit protein bL33B (50 aa).

This sequence belongs to the bacterial ribosomal protein bL33 family.

This Mesomycoplasma hyopneumoniae (strain 7448) (Mycoplasma hyopneumoniae) protein is Large ribosomal subunit protein bL33B.